We begin with the raw amino-acid sequence, 475 residues long: Ribulose bisphosphate carboxylase large chain (475 aa).

Positions 1–2 (MS) are excised as a propeptide. Proline 3 is modified (N-acetylproline). Lysine 14 is subject to N6,N6,N6-trimethyllysine. Residues asparagine 123 and threonine 173 each coordinate substrate. Residue lysine 175 is the Proton acceptor of the active site. Residue lysine 177 participates in substrate binding. Residues lysine 201, aspartate 203, and glutamate 204 each coordinate Mg(2+). Residue lysine 201 is modified to N6-carboxylysine. The active-site Proton acceptor is the histidine 294. Substrate contacts are provided by arginine 295, histidine 327, and serine 379.

The protein belongs to the RuBisCO large chain family. Type I subfamily. Heterohexadecamer of 8 large chains and 8 small chains; disulfide-linked. The disulfide link is formed within the large subunit homodimers. It depends on Mg(2+) as a cofactor. In terms of processing, the disulfide bond which can form in the large chain dimeric partners within the hexadecamer appears to be associated with oxidative stress and protein turnover.

It is found in the plastid. The protein resides in the chloroplast. It carries out the reaction 2 (2R)-3-phosphoglycerate + 2 H(+) = D-ribulose 1,5-bisphosphate + CO2 + H2O. The catalysed reaction is D-ribulose 1,5-bisphosphate + O2 = 2-phosphoglycolate + (2R)-3-phosphoglycerate + 2 H(+). Its function is as follows. RuBisCO catalyzes two reactions: the carboxylation of D-ribulose 1,5-bisphosphate, the primary event in carbon dioxide fixation, as well as the oxidative fragmentation of the pentose substrate in the photorespiration process. Both reactions occur simultaneously and in competition at the same active site. In Picea sitchensis (Sitka spruce), this protein is Ribulose bisphosphate carboxylase large chain.